A 131-amino-acid chain; its full sequence is uncharacterized protein (131 aa).

Residues 17–39 form a helical membrane-spanning segment; sequence VILLILILLPVVFLHIMLATWGL.

Its subcellular location is the membrane. This is an uncharacterized protein from Archaeoglobus fulgidus (strain ATCC 49558 / DSM 4304 / JCM 9628 / NBRC 100126 / VC-16).